Here is a 448-residue protein sequence, read N- to C-terminus: Ribosomal protein uS12 methylthiotransferase RimO (448 aa).

An MTTase N-terminal domain is found at 10 to 120 (PNIGFVSLGC…VMEHVHKYVP (111 aa)). The [4Fe-4S] cluster site is built by cysteine 19, cysteine 55, cysteine 84, cysteine 152, cysteine 156, and cysteine 159. The Radical SAM core domain occupies 138 to 379 (LTPKHYAYLK…MELQQQISAQ (242 aa)). A TRAM domain is found at 382–448 (QQKIGKTLPV…ADEYDLWGTC (67 aa)).

This sequence belongs to the methylthiotransferase family. RimO subfamily. It depends on [4Fe-4S] cluster as a cofactor.

The protein localises to the cytoplasm. The enzyme catalyses L-aspartate(89)-[ribosomal protein uS12]-hydrogen + (sulfur carrier)-SH + AH2 + 2 S-adenosyl-L-methionine = 3-methylsulfanyl-L-aspartate(89)-[ribosomal protein uS12]-hydrogen + (sulfur carrier)-H + 5'-deoxyadenosine + L-methionine + A + S-adenosyl-L-homocysteine + 2 H(+). Functionally, catalyzes the methylthiolation of an aspartic acid residue of ribosomal protein uS12. The polypeptide is Ribosomal protein uS12 methylthiotransferase RimO (Mannheimia succiniciproducens (strain KCTC 0769BP / MBEL55E)).